We begin with the raw amino-acid sequence, 185 residues long: Peptidyl-tRNA hydrolase (185 aa).

Tyr15 lines the tRNA pocket. The active-site Proton acceptor is His20. TRNA is bound by residues Tyr64, Asn66, and Asn112.

It belongs to the PTH family. In terms of assembly, monomer.

Its subcellular location is the cytoplasm. It catalyses the reaction an N-acyl-L-alpha-aminoacyl-tRNA + H2O = an N-acyl-L-amino acid + a tRNA + H(+). Its function is as follows. Hydrolyzes ribosome-free peptidyl-tRNAs (with 1 or more amino acids incorporated), which drop off the ribosome during protein synthesis, or as a result of ribosome stalling. Catalyzes the release of premature peptidyl moieties from peptidyl-tRNA molecules trapped in stalled 50S ribosomal subunits, and thus maintains levels of free tRNAs and 50S ribosomes. This chain is Peptidyl-tRNA hydrolase, found in Porphyromonas gingivalis (strain ATCC BAA-308 / W83).